A 398-amino-acid polypeptide reads, in one-letter code: GTPase Obg (398 aa).

The region spanning 1–159 is the Obg domain; it reads MKFVDEAPIS…RNLKLELKVL (159 aa). The interval 128 to 148 is disordered; it reads TRFKSSTNRVPRKTTPGTEGE. Residues 160 to 333 form the OBG-type G domain; it reads ADVGMLGLPN…LSGKIMDHLE (174 aa). Residues 166–173, 191–195, 213–216, 283–286, and 314–316 each bind GTP; these read GLPNAGKS, FTTLV, DIPG, NKID, and SAL. The Mg(2+) site is built by Ser173 and Thr193.

The protein belongs to the TRAFAC class OBG-HflX-like GTPase superfamily. OBG GTPase family. As to quaternary structure, monomer. Mg(2+) is required as a cofactor.

It is found in the cytoplasm. Its function is as follows. An essential GTPase which binds GTP, GDP and possibly (p)ppGpp with moderate affinity, with high nucleotide exchange rates and a fairly low GTP hydrolysis rate. Plays a role in control of the cell cycle, stress response, ribosome biogenesis and in those bacteria that undergo differentiation, in morphogenesis control. The polypeptide is GTPase Obg (Cellvibrio japonicus (strain Ueda107) (Pseudomonas fluorescens subsp. cellulosa)).